Consider the following 356-residue polypeptide: Tyrosine recombinase XerS (356 aa).

Residues 16–121 (IMPWYVLDYY…ALSSLYKYLT (106 aa)) form the Core-binding (CB) domain. Residues 169-354 (AFLDYVDKEY…VNDEQKNALD (186 aa)) form the Tyr recombinase domain. Catalysis depends on residues R210, K234, H306, R309, and H332. The active-site O-(3'-phospho-DNA)-tyrosine intermediate is Y341.

The protein belongs to the 'phage' integrase family. XerS subfamily.

It localises to the cytoplasm. FtsK is required for recombination. Site-specific tyrosine recombinase, which acts by catalyzing the cutting and rejoining of the recombining DNA molecules. Essential to convert dimers of the bacterial chromosome into monomers to permit their segregation at cell division. The polypeptide is Tyrosine recombinase XerS (Streptococcus pyogenes serotype M1).